A 533-amino-acid chain; its full sequence is UDP-glucuronosyltransferase 1-2 (533 aa).

Positions 1–27 are cleaved as a signal peptide; it reads MDTGLCAPLRGLSGLLLLLCALPWAEG. 4 N-linked (GlcNAc...) asparagine glycosylation sites follow: N133, N141, N295, and N433. A helical membrane pass occupies residues 491 to 507; sequence VIGFLLAIVLTVVFIVY.

Belongs to the UDP-glycosyltransferase family.

It is found in the microsome. The protein resides in the endoplasmic reticulum membrane. The enzyme catalyses glucuronate acceptor + UDP-alpha-D-glucuronate = acceptor beta-D-glucuronoside + UDP + H(+). UDPGT is of major importance in the conjugation and subsequent elimination of potentially toxic xenobiotics and endogenous compounds. This Rattus norvegicus (Rat) protein is UDP-glucuronosyltransferase 1-2 (Ugt1a2).